The chain runs to 433 residues: ATP-dependent RNA helicase SUB2 (433 aa).

The span at 1-17 shows a compositional bias: acidic residues; that stretch reads MSAENQEELLDYSDSEE. The tract at residues 1–39 is disordered; the sequence is MSAENQEELLDYSDSEEIAVPTTTQAGEGESANDKEADK. The Q motif signature appears at 49 to 77; the sequence is TGFRDFLLKPELLRAIGDCGFEHPSEVQQ. One can recognise a Helicase ATP-binding domain in the interval 80-255; it reads IPQSILGTDV…KKFMQNPLEI (176 aa). Residue 93–100 coordinates ATP; it reads AKSGLGKT. Residues 202 to 205 carry the DEAD box motif; it reads DECD. The 162-residue stretch at 267–428 folds into the Helicase C-terminal domain; the sequence is GLQQYYIKLE…EFPEEGVDPS (162 aa).

The protein belongs to the DEAD box helicase family. DECD subfamily.

It is found in the nucleus. The enzyme catalyses ATP + H2O = ADP + phosphate + H(+). Functionally, ATP-binding RNA helicase involved in transcription elongation and required for the export of mRNA out of the nucleus. SUB2 also plays a role in pre-mRNA splicing and spliceosome assembly. May be involved in rDNA and telomeric silencing, and maintenance of genome integrity. The polypeptide is ATP-dependent RNA helicase SUB2 (SUB2) (Lodderomyces elongisporus (strain ATCC 11503 / CBS 2605 / JCM 1781 / NBRC 1676 / NRRL YB-4239) (Yeast)).